The sequence spans 243 residues: Putative glycerophosphodiester phosphodiesterase YhdW (243 aa).

Residues 1–238 (MYIIAHRGAS…DYPDFIIKDG (238 aa)) form the GP-PDE domain. Residue His6 is the Proton acceptor of the active site. 2 residues coordinate Ca(2+): Glu33 and Asp35. The Proton donor role is filled by His48. Glu107 contacts Ca(2+).

It belongs to the glycerophosphoryl diester phosphodiesterase family. It depends on Ca(2+) as a cofactor.

The catalysed reaction is a sn-glycero-3-phosphodiester + H2O = an alcohol + sn-glycerol 3-phosphate + H(+). Glycerophosphodiester phosphodiesterase hydrolyzes glycerophosphodiesters into glycerol-3-phosphate (G3P) and the corresponding alcohol. This Bacillus subtilis (strain 168) protein is Putative glycerophosphodiester phosphodiesterase YhdW (yhdW).